A 531-amino-acid chain; its full sequence is RNA-binding protein RO60 (531 aa).

One can recognise a TROVE domain in the interval 24–360 (VRNNAGGFVY…AFGNVQPANT (337 aa)). Positions 128-274 (RTGTMLLHFL…TNGLTWLLRN (147 aa)) are RNA-binding. The interval 352-531 (FGNVQPANTR…VMTAFARGEV (180 aa)) is VWFA-like domain. Ser369, Ser371, and Thr438 together coordinate a divalent metal cation.

Belongs to the Ro 60 kDa family. As to quaternary structure, forms oligomers upon binding DrY RNA, The multimers are of an average size of 700 kDa and are composed of around 12 molecules of Rsr-DrY RNA.

The protein localises to the cytoplasm. Functionally, binds to several small RNAs that accumulate during recovery from UV irradiation. Contributes to the resistance of D.radiodurans to ultraviolet irradiation. In Deinococcus radiodurans (strain ATCC 13939 / DSM 20539 / JCM 16871 / CCUG 27074 / LMG 4051 / NBRC 15346 / NCIMB 9279 / VKM B-1422 / R1), this protein is RNA-binding protein RO60.